We begin with the raw amino-acid sequence, 270 residues long: tRNA pseudouridine synthase A (270 aa).

Asp-54 acts as the Nucleophile in catalysis. Residue Tyr-112 participates in substrate binding.

It belongs to the tRNA pseudouridine synthase TruA family. As to quaternary structure, homodimer.

The enzyme catalyses uridine(38/39/40) in tRNA = pseudouridine(38/39/40) in tRNA. Formation of pseudouridine at positions 38, 39 and 40 in the anticodon stem and loop of transfer RNAs. The chain is tRNA pseudouridine synthase A from Bordetella bronchiseptica (strain ATCC BAA-588 / NCTC 13252 / RB50) (Alcaligenes bronchisepticus).